A 1055-amino-acid chain; its full sequence is Leukotoxin (1055 aa).

Positions 11–49 (QQAAQFANSVADRAKENIDAAKEQLQKALDKLGKTGKKL) form a coiled coil. Cholesterol recognition/amino acid consensus (CRAC) region regions lie at residues 334–340 (LEEYSKR) and 502–506 (VDYLK). Hemolysin-type calcium-binding repeat units lie at residues 721–738 (IGST…NDVF), 739–756 (HGHD…DDRL), 757–774 (YGDN…NDKL), 775–792 (YGGA…NNYL), 793–810 (DGGE…SDIL), 811–828 (RGGS…DDLL), and 829–846 (DGGE…NDIY). The segment at 795-815 (GEGDDHLEGGNGSDILRGGSG) is disordered. Positions 990 to 1009 (KGKSSSLMSSSRSSSMLTQK) are disordered. The segment covering 993 to 1006 (SSSLMSSSRSSSML) has biased composition (low complexity).

The protein belongs to the RTX prokaryotic toxin (TC 1.C.11) family. As to quaternary structure, interacts specifically with the superoxide dismutase [Cu-Zn]. This interaction may protect LtxA from reactive oxygen species and reactive nitrogen species produced by host inflammatory cells during disease. Interacts with the human leukocyte adhesion glycoprotein LFA-1 (ITGAL-ITGB2). In terms of processing, acylated at Lys-562 and Lys-687 by LtxC. This modification is required for full activity. Isolated methyl esters contain palmitoyl and palmitolyl fatty acyl groups with smaller quantities of myristic and stearic fatty acids.

It is found in the cell outer membrane. It localises to the secreted. In terms of biological role, virulence factor that plays an important role in immune evasion. Lyses human lymphocytes and monocytes. Binds to the LFA-1 integrin on the surface of the host cell and to cholesterol-containing membranes, which probably results in large LtxA-LFA-1 clusters in lipid rafts. Also shows beta-hemolytic activity on certain types of growth media. The chain is Leukotoxin from Aggregatibacter actinomycetemcomitans (Actinobacillus actinomycetemcomitans).